Consider the following 223-residue polypeptide: Deoxyribose-phosphate aldolase (223 aa).

The Proton donor/acceptor role is filled by Asp92. The Schiff-base intermediate with acetaldehyde role is filled by Lys158. The active-site Proton donor/acceptor is Lys188.

This sequence belongs to the DeoC/FbaB aldolase family. DeoC type 1 subfamily.

The protein localises to the cytoplasm. The catalysed reaction is 2-deoxy-D-ribose 5-phosphate = D-glyceraldehyde 3-phosphate + acetaldehyde. The protein operates within carbohydrate degradation; 2-deoxy-D-ribose 1-phosphate degradation; D-glyceraldehyde 3-phosphate and acetaldehyde from 2-deoxy-alpha-D-ribose 1-phosphate: step 2/2. In terms of biological role, catalyzes a reversible aldol reaction between acetaldehyde and D-glyceraldehyde 3-phosphate to generate 2-deoxy-D-ribose 5-phosphate. The sequence is that of Deoxyribose-phosphate aldolase from Mycobacterium avium (strain 104).